Reading from the N-terminus, the 315-residue chain is 10-epi-cubebol synthase (315 aa).

Mg(2+) contacts are provided by aspartate 79, asparagine 220, serine 224, and glutamate 228. The short motif at 79–83 is the DDXXD motif element; it reads DDVCE. Positions 220 to 228 match the NXXXSXXXE motif motif; that stretch reads NDIYSLRKE.

It belongs to the terpene synthase family. Mg(2+) is required as a cofactor.

The catalysed reaction is (2E,6E)-farnesyl diphosphate + H2O = 10-epi-cubebol + diphosphate. In terms of biological role, catalyzes the cyclization of farnesyl diphosphate (FPP) to 10-epi-cubebol. Is also responsible for the formation of many other sesquiterpenes, mainly cadalanes and cubebanes, including 1,10-di-epi-cubebol and the cadalanes delta-cadinene, T-cadinol and alpha-cadinol. This is 10-epi-cubebol synthase from Sorangium cellulosum (strain So ce56) (Polyangium cellulosum (strain So ce56)).